The primary structure comprises 623 residues: Kelch repeat and BTB domain-containing protein 2 (623 aa).

One can recognise a BTB domain in the interval 31-98 (TDIVLIVEGT…AYTGNLAMND (68 aa)). In terms of domain architecture, BACK spans 133-229 (CVRLLSFADL…IRIDALSEVT (97 aa)). Position 300 is a phosphoserine (Ser300). Kelch repeat units lie at residues 317–380 (DIYI…CCEG), 381–429 (HIYA…VVHD), 431–469 (IYVM…AFGD), 470–529 (KIFY…RAVV), and 535–581 (CVFM…DFRC).

Component of the BCR(KBTBD2) E3 ubiquitin ligase complex, at least composed of CUL3, KBTBD2 and RBX1. Interacts (via the BTB domain) with CUL3.

It participates in protein modification; protein ubiquitination. In terms of biological role, substrate-specific adapter of a BCR (BTB-CUL3-RBX1) E3 ubiquitin ligase complex that acts as a regulator of the insulin signaling pathway, modulating insulin sensitivity by limiting PIK3R1/p85alpha abundance in adipocytes. Targets PIK3R1, the regulatory subunit of phosphatidylinositol 3-kinase (PI3K), for 'Lys-48'-linked polyubiquitination and proteasome-mediated degradation. This is Kelch repeat and BTB domain-containing protein 2 (KBTBD2) from Pongo abelii (Sumatran orangutan).